The chain runs to 298 residues: Putative ankyrin repeat-containing protein TP_0502 (298 aa).

ANK repeat units follow at residues 143–172, 176–205, 210–239, and 243–272; these read CFEENFIATVMDGNIDIVNLFLDAGFSAAL, RGTPVLSLAVREGQDEMAAQLIARGAPVDQ, RAYSALMEAAQIGNRTVARLLLHAGADPNV, and NGQTALVLAVGRKDHVLIRLLMDHGANPYL.

This chain is Putative ankyrin repeat-containing protein TP_0502, found in Treponema pallidum (strain Nichols).